A 755-amino-acid chain; its full sequence is Exocyst complex component 3 (755 aa).

Position 38 is an N6-acetyllysine (Lys-38).

This sequence belongs to the SEC6 family. The exocyst complex is composed of EXOC1, EXOC2, EXOC3, EXOC4, EXOC5, EXOC6, EXOC7 and EXOC8. Interacts with EXOC3L1. Interacts with BIRC6/bruce. Interacts with MYRIP. Interacts with SLC6A9.

It is found in the cytoplasm. Its subcellular location is the perinuclear region. The protein localises to the cell projection. It localises to the growth cone. The protein resides in the midbody. It is found in the golgi apparatus. Its subcellular location is the neuron projection. In terms of biological role, component of the exocyst complex involved in the docking of exocytic vesicles with fusion sites on the plasma membrane. This is Exocyst complex component 3 (Exoc3) from Mus musculus (Mouse).